Here is a 450-residue protein sequence, read N- to C-terminus: MREIVHIQAGQCGNQIGAKFWEVISDEHGIDPSGNYVGDSDLQLERISVYYNEASSHKYVPRAILVDLEPGTMDSVRSGAFGHLFRPDNFIFGQSGAGNNWAKGHYTEGAELVDSVLDVVRKECENCDCLQGFQLTHSLGGGTGSGMGTLLISKVREEYPDRIMNTFSVVPSPKVSDTVVEPYNATLSIHQLVENTDETYCIDNEALYDICFRTLKLATPTYGDLNHLVSATMSGVTTSLRFPGQLNADLRKLAVNMVPFPRLHFFMPGFAPLTARGSQQYRALTVPELTQQMFDAKNMMAACDPRHGRYLTVATVFRGRMSMKEVDEQMLAIQSKNSSYFVEWIPNNVKVAVCDIPPRGLKMSSTFIGNSTAIQELFKRISEQFTAMFRRKAFLHWYTGEGMDEMEFTEAESNMNDLVSEYQQYQDATAEEEGEMYEDDEEESEAQGPK.

Positions 1–4 (MREI) match the MREI motif motif. Residues Gly10, Gln11, Cys12, and Gln15 each coordinate GDP. Residue Gln11 participates in GTP binding. A GTP-binding site is contributed by Glu69. Glu69 provides a ligand contact to Mg(2+). Residues Asn99, Ser138, Gly142, Thr143, and Gly144 each coordinate GDP. GTP contacts are provided by Ser138, Gly142, Thr143, and Gly144. The residue at position 172 (Ser172) is a Phosphoserine; by CDK1. Residues Asp177, Asn204, Tyr222, and Asn226 each coordinate GDP. Position 204 (Asn204) interacts with GTP. Residue Asn226 participates in GTP binding. The segment at 425-450 (YQDATAEEEGEMYEDDEEESEAQGPK) is disordered. Residues 429–450 (TAEEEGEMYEDDEEESEAQGPK) show a composition bias toward acidic residues. Residue Glu438 is modified to 5-glutamyl polyglutamate. A Phosphoserine modification is found at Ser444.

The protein belongs to the tubulin family. In terms of assembly, heterodimer of alpha- and beta-tubulin. A typical microtubule is a hollow water-filled tube with an outer diameter of 25 nm and an inner diameter of 15 nM. Alpha-beta heterodimers associate head-to-tail to form protofilaments running lengthwise along the microtubule wall with the beta-tubulin subunit facing the microtubule plus end conferring a structural polarity. Microtubules usually have 13 protofilaments but different protofilament numbers can be found in some organisms and specialized cells. Interacts with gamma-tubulin; the interaction allows microtubules to nucleate from the gamma-tubulin ring complex (gTuRC). Interacts with UNC5C (via cytoplasmic domain); this interaction is decreased by NTN1/Netrin-1. Interacts with NLRP5/MATER at cytoskeleton microtubules. Interacts with DPYSL5. Interacts with CFAP61. It depends on Mg(2+) as a cofactor. Some glutamate residues at the C-terminus are polyglutamylated, resulting in polyglutamate chains on the gamma-carboxyl group. Polyglutamylation plays a key role in microtubule severing by spastin (SPAST). SPAST preferentially recognizes and acts on microtubules decorated with short polyglutamate tails: severing activity by SPAST increases as the number of glutamates per tubulin rises from one to eight, but decreases beyond this glutamylation threshold. Glutamylation is also involved in cilia motility. In terms of processing, some glutamate residues at the C-terminus are monoglycylated but not polyglycylated due to the absence of functional TTLL10 in human. Monoglycylation is mainly limited to tubulin incorporated into cilia and flagella axonemes, which is required for their stability and maintenance. Flagella glycylation controls sperm motility. Both polyglutamylation and monoglycylation can coexist on the same protein on adjacent residues, and lowering glycylation levels increases polyglutamylation, and reciprocally. Post-translationally, phosphorylated on Ser-172 by CDK1 during the cell cycle, from metaphase to telophase, but not in interphase. This phosphorylation inhibits tubulin incorporation into microtubules. In terms of tissue distribution, expression is primarily restricted to central and peripheral nervous system. Greatly increased expression in most cancerous tissues.

Its subcellular location is the cytoplasm. The protein localises to the cytoskeleton. It is found in the cell projection. The protein resides in the growth cone. It localises to the lamellipodium. Its subcellular location is the filopodium. Functionally, tubulin is the major constituent of microtubules, protein filaments consisting of alpha- and beta-tubulin heterodimers. Microtubules grow by the addition of GTP-tubulin dimers to the microtubule end, where a stabilizing cap forms. Below the cap, alpha-beta tubulin heterodimers are in GDP-bound state, owing to GTPase activity of alpha-tubulin. TUBB3 plays a critical role in proper axon guidance and maintenance. Binding of NTN1/Netrin-1 to its receptor UNC5C might cause dissociation of UNC5C from polymerized TUBB3 in microtubules and thereby lead to increased microtubule dynamics and axon repulsion. Plays a role in dorsal root ganglion axon projection towards the spinal cord. The polypeptide is Tubulin beta-3 chain (TUBB3) (Homo sapiens (Human)).